A 257-amino-acid chain; its full sequence is Glutamate racemase (257 aa).

Substrate-binding positions include 12–13 (DS) and 44–45 (YG). The active-site Proton donor/acceptor is C75. Substrate is bound at residue 76-77 (NT). Catalysis depends on C185, which acts as the Proton donor/acceptor. 186–187 (TH) provides a ligand contact to substrate.

The protein belongs to the aspartate/glutamate racemases family.

The catalysed reaction is L-glutamate = D-glutamate. It functions in the pathway cell wall biogenesis; peptidoglycan biosynthesis. Provides the (R)-glutamate required for cell wall biosynthesis. This is Glutamate racemase from Clostridium botulinum (strain 657 / Type Ba4).